A 3255-amino-acid polypeptide reads, in one-letter code: Genome polyprotein (3255 aa).

Residues 292-437 form the Peptidase S30 domain; sequence VMNQQTLMAF…HSITHRMVQY (146 aa). Catalysis depends on for P1 proteinase activity residues His-345, Asp-354, and Ser-388. The short motif at 489–492 is the Involved in interaction with stylet and aphid transmission element; it reads KITC. Positions 747–749 match the Involved in virions binding and aphid transmission motif; sequence PTK. In terms of domain architecture, Peptidase C6 spans 773-895; sequence MFVTKDGYCY…ESEMQHYRVG (123 aa). Catalysis depends on for helper component proteinase activity residues Cys-781 and His-854. The Helicase ATP-binding domain occupies 1397 to 1549; that stretch reads EIAHNEYRDI…PMHMVDIATE (153 aa). ATP is bound at residue 1410 to 1417; it reads GGVGSGKS. The DECH box signature appears at 1499–1502; it reads DECH. The Helicase C-terminal domain maps to 1568-1727; it reads DATKKGDNIL…GLPVMTSNVS (160 aa). The Nuclear localization signal signature appears at 2062–2069; it reads EKGKKSGK. Tyr-2084 bears the O-(5'-phospho-RNA)-tyrosine mark. The region spanning 2215–2433 is the Peptidase C4 domain; that stretch reads SKTLFRGLRD…MVWGGINLIN (219 aa). Active-site for nuclear inclusion protein A activity residues include His-2260, Asp-2295, and Cys-2365. Residues 2699-2823 form the RdRp catalytic domain; that stretch reads WVYCDADGSQ…AIKPEHESLL (125 aa). The segment at 2980 to 3028 is disordered; the sequence is AKLDAGQGSKTDDKQKNSADPKDNIITEKGSGSGQMKKDDDINAGLHGK. The span at 2989-3005 shows a compositional bias: basic and acidic residues; sequence KTDDKQKNSADPKDNII. Residue Thr-3237 is modified to Phosphothreonine.

Belongs to the potyviridae genome polyprotein family. As to quaternary structure, interacts with host eIF4E protein (via cap-binding region); this interaction mediates the translation of the VPg-viral RNA conjugates. Part of a complex that comprises VPg, RNA, host EIF4E and EIF4G; this interaction mediates the translation of the VPg-viral RNA conjugates. VPg is uridylylated by the polymerase and is covalently attached to the 5'-end of the genomic RNA. This uridylylated form acts as a nucleotide-peptide primer for the polymerase. Post-translationally, potyviral RNA is expressed as two polyproteins which undergo post-translational proteolytic processing. Genome polyprotein is processed by NIa-pro, P1 and HC-pro proteinases resulting in the production of at least ten individual proteins. P3N-PIPO polyprotein is cleaved by P1 and HC-pro proteinases resulting in the production of three individual proteins. The P1 proteinase and the HC-pro cleave only their respective C-termini autocatalytically. 6K1 is essential for proper proteolytic separation of P3 from CI.

Its subcellular location is the host cytoplasmic vesicle. The protein resides in the host nucleus. It localises to the virion. The enzyme catalyses RNA(n) + a ribonucleoside 5'-triphosphate = RNA(n+1) + diphosphate. The catalysed reaction is Hydrolyzes glutaminyl bonds, and activity is further restricted by preferences for the amino acids in P6 - P1' that vary with the species of potyvirus, e.g. Glu-Xaa-Xaa-Tyr-Xaa-Gln-|-(Ser or Gly) for the enzyme from tobacco etch virus. The natural substrate is the viral polyprotein, but other proteins and oligopeptides containing the appropriate consensus sequence are also cleaved.. It catalyses the reaction Hydrolyzes a Gly-|-Gly bond at its own C-terminus, commonly in the sequence -Tyr-Xaa-Val-Gly-|-Gly, in the processing of the potyviral polyprotein.. Functionally, required for aphid transmission and also has proteolytic activity. Only cleaves a Gly-Gly dipeptide at its own C-terminus. Interacts with virions and aphid stylets. Acts as a suppressor of RNA-mediated gene silencing, also known as post-transcriptional gene silencing (PTGS), a mechanism of plant viral defense that limits the accumulation of viral RNAs. May have RNA-binding activity. Its function is as follows. Has helicase activity. It may be involved in replication. Indispensable for virus replication. Reduces the abundance of host transcripts related to jasmonic acid biosynthesis therefore altering the host defenses. In order to increase its own stability, decreases host protein degradation pathways. In terms of biological role, indispensable for virus replication. Functionally, mediates the cap-independent, EIF4E-dependent translation of viral genomic RNAs. Binds to the cap-binding site of host EIF4E and thus interferes with the host EIF4E-dependent mRNA export and translation. VPg-RNA directly binds EIF4E and is a template for transcription. Also forms trimeric complexes with EIF4E-EIF4G, which are templates for translation. Its function is as follows. Has RNA-binding and proteolytic activities. An RNA-dependent RNA polymerase that plays an essential role in the virus replication. In terms of biological role, involved in aphid transmission, cell-to-cell and systemis movement, encapsidation of the viral RNA and in the regulation of viral RNA amplification. This chain is Genome polyprotein, found in Lettuce mosaic virus (strain 0 / isolate French) (LMV).